We begin with the raw amino-acid sequence, 940 residues long: Phagocyte signaling-impaired protein (940 aa).

The stretch at 77-110 (STTLHVMTLCYKETDQLDKICQIFTSASKQLPGN) is one TPR repeat.

Belongs to the MDM20/NAA25 family. In terms of assembly, component of the N-terminal acetyltransferase B (NatB) complex.

The protein localises to the lysosome. Its function is as follows. Non-catalytic subunit of the NatB complex which catalyzes acetylation of the N-terminal methionine residues of proteins beginning with Met-Asp or Met-Glu. Has 2 roles in the larval immune response: required both for the phagocytic degradation of internalized bacteria and for the induction of Defensin in the fat body. Within the phagocytic blood cells, has a role in detection of infection and activation of the humoral immune response. This chain is Phagocyte signaling-impaired protein, found in Aedes aegypti (Yellowfever mosquito).